We begin with the raw amino-acid sequence, 442 residues long: Endothelin receptor type B (442 aa).

A signal peptide spans 1–26 (MQSSASRCGRALVALLLACGLLGVWG). The Extracellular segment spans residues 27–101 (EKRGFPPAQA…RKIEINKTFK (75 aa)). 2 N-linked (GlcNAc...) asparagine glycosylation sites follow: asparagine 60 and asparagine 97. The helical transmembrane segment at 102 to 126 (YINTIVSCLVFVLGIIGNSTLLRII) threads the bilayer. Over 127 to 137 (YKNKCMRNGPN) the chain is Cytoplasmic. A helical membrane pass occupies residues 138–163 (ILIASLALGDLLHIIIDIPINAYKLL). The Extracellular portion of the chain corresponds to 164–175 (AGDWPFGAEMCK). Cysteine 174 and cysteine 255 are oxidised to a cystine. A helical membrane pass occupies residues 176 to 197 (LVPFIQKASVGITVLSLCALSI). Topologically, residues 198–218 (DRYRAVASWSRIKGIGVPKWT) are cytoplasmic. Residues 219 to 243 (AVEIVLIWVVSVVLAVPEAIGFDVI) traverse the membrane as a helical segment. The Extracellular segment spans residues 244–271 (TSDYKGKPLRVCMLNPFQKTAFMQFYKT). A helical membrane pass occupies residues 272–296 (AKDWWLFSFYFCLPLAITAIFYTLM). Topologically, residues 297-324 (TCEMLRKKSGMQIALNDHLKQRREVAKT) are cytoplasmic. At serine 305 the chain carries Phosphoserine. A helical membrane pass occupies residues 325–350 (VFCLVLVFALCWLPLHLSRILKLTLY). Topologically, residues 351–362 (DQSNPQRCELLS) are extracellular. A helical transmembrane segment spans residues 363–389 (FLLVLDYIGINMASLNSCINPIALYLV). At 390 to 442 (SKRFKNCFKSCLCCWCQTFEEKQSLEEKQSCLKFKANDHGYDNFRSSNKYSSS) the chain is on the cytoplasmic side. S-palmitoyl cysteine attachment occurs at residues cysteine 402, cysteine 403, and cysteine 405. Serine 419 carries the phosphoserine modification. Position 439 is a phosphotyrosine (tyrosine 439). Residues serine 440, serine 441, and serine 442 each carry the phosphoserine modification.

The protein belongs to the G-protein coupled receptor 1 family. Endothelin receptor subfamily. EDNRB sub-subfamily. In terms of tissue distribution, widely distributed in cell types of a variety of tissues.

The protein resides in the cell membrane. Its function is as follows. Non-specific receptor for endothelin 1, 2, and 3. Mediates its action by association with G proteins that activate a phosphatidylinositol-calcium second messenger system. The sequence is that of Endothelin receptor type B from Rattus norvegicus (Rat).